The chain runs to 118 residues: Holo-[acyl-carrier-protein] synthase (118 aa).

Residues D8 and E58 each coordinate Mg(2+).

The protein belongs to the P-Pant transferase superfamily. AcpS family. Mg(2+) is required as a cofactor.

It is found in the cytoplasm. The catalysed reaction is apo-[ACP] + CoA = holo-[ACP] + adenosine 3',5'-bisphosphate + H(+). Its function is as follows. Transfers the 4'-phosphopantetheine moiety from coenzyme A to a Ser of acyl-carrier-protein. The protein is Holo-[acyl-carrier-protein] synthase of Streptococcus pyogenes serotype M1.